The chain runs to 248 residues: Transcription termination/antitermination protein NusG (248 aa).

Residues 197 to 227 (KGDQVRVIEGPFMNFTGTVEEVHPEKRKLTV) enclose the KOW domain.

The protein belongs to the NusG family. Monomer. Homodimer.

Its function is as follows. Participates in transcription elongation, termination and antitermination. This is Transcription termination/antitermination protein NusG from Aquifex aeolicus (strain VF5).